A 286-amino-acid chain; its full sequence is Prohibitin-6, mitochondrial (286 aa).

The Mitochondrial matrix segment spans residues 1–12 (MNFKNVKVPKGP). The helical; Signal-anchor for type II membrane protein transmembrane segment at 13–35 (GGGVIAAVVIGGLSLYGATHTLY) threads the bilayer. The Mitochondrial intermembrane portion of the chain corresponds to 36–286 (NVDGGHRAIV…AMDLDVKPKK (251 aa)).

The protein belongs to the prohibitin family. In terms of assembly, component of a prohibitin multimeric complex in mitochondrial membranes. In terms of tissue distribution, mostly expressed in proliferative tissues, including vasculature, shoot and root apical tissues.

The protein resides in the mitochondrion inner membrane. Functionally, prohibitin probably acts as a holdase/unfoldase for the stabilization of newly synthesized mitochondrial proteins. This chain is Prohibitin-6, mitochondrial (PHB6), found in Arabidopsis thaliana (Mouse-ear cress).